The sequence spans 71 residues: uncharacterized protein (71 aa).

The Cytoplasmic segment spans residues 1–16; that stretch reads MLLLYTVMILTCIIYK. The helical transmembrane segment at 17 to 38 threads the bilayer; the sequence is LVPDNKYWPIHMFFFIMIYIVY. At 39-69 the chain is on the extracellular side; the sequence is MYEKLDIHEKSQFWNYTMARLSGHPVPTIIC. Asn-53 is a glycosylation site (N-linked (GlcNAc...) asparagine; by host).

It belongs to the asfivirus X69R family.

It is found in the host membrane. This is an uncharacterized protein from African swine fever virus (isolate Pig/Kenya/KEN-50/1950) (ASFV).